The sequence spans 431 residues: Glutamyl-tRNA reductase (431 aa).

Substrate contacts are provided by residues 49–52 (TCDR), serine 109, 114–116 (EPH), and glutamine 120. Cysteine 50 (nucleophile) is an active-site residue. 189–194 (GTQEMG) lines the NADP(+) pocket.

The protein belongs to the glutamyl-tRNA reductase family. As to quaternary structure, homodimer.

It catalyses the reaction (S)-4-amino-5-oxopentanoate + tRNA(Glu) + NADP(+) = L-glutamyl-tRNA(Glu) + NADPH + H(+). Its pathway is porphyrin-containing compound metabolism; protoporphyrin-IX biosynthesis; 5-aminolevulinate from L-glutamyl-tRNA(Glu): step 1/2. The protein operates within porphyrin-containing compound metabolism; chlorophyll biosynthesis. Functionally, catalyzes the NADPH-dependent reduction of glutamyl-tRNA(Glu) to glutamate 1-semialdehyde (GSA). The sequence is that of Glutamyl-tRNA reductase from Rhodospirillum rubrum (strain ATCC 11170 / ATH 1.1.1 / DSM 467 / LMG 4362 / NCIMB 8255 / S1).